Consider the following 224-residue polypeptide: Zinc finger protein 22 (224 aa).

The interval 1–34 (MRLAKPKAGISRSSSQGKAYENKRKTGRQRQKWG) is disordered. N6-acetyllysine is present on residues lysine 18 and lysine 23. Position 49 is a phosphoserine (serine 49). C2H2-type zinc fingers lie at residues 55–77 (YKCT…QKIH), 83–105 (HKCA…RRIH), 111–133 (YKCD…QRIH), 139–161 (YQCD…QRTH), and 167–189 (YQCS…MKVH).

It belongs to the krueppel C2H2-type zinc-finger protein family. In terms of tissue distribution, in the embryo, expressed in developing craniofacial structures including dental epithelium of maxillary molar tooth organs, tongue epithelium and muscle, and craniofacial bone osteoblasts. In the adult, expressed in mesoderm-derived tissues such as skeletal muscle, heart, kidney and liver. Intermediate expression in spleen, thymus and brain. Low levels in endoderm-derived tissues such as intestine and colon.

It is found in the nucleus. Functionally, binds DNA through the consensus sequence 5'-CAATG-3'. May be involved in transcriptional regulation and may play a role in tooth formation. This Homo sapiens (Human) protein is Zinc finger protein 22 (ZNF22).